We begin with the raw amino-acid sequence, 89 residues long: Small ribosomal subunit protein uS15 (89 aa).

The protein belongs to the universal ribosomal protein uS15 family. In terms of assembly, part of the 30S ribosomal subunit. Forms a bridge to the 50S subunit in the 70S ribosome, contacting the 23S rRNA.

Its function is as follows. One of the primary rRNA binding proteins, it binds directly to 16S rRNA where it helps nucleate assembly of the platform of the 30S subunit by binding and bridging several RNA helices of the 16S rRNA. Forms an intersubunit bridge (bridge B4) with the 23S rRNA of the 50S subunit in the ribosome. The chain is Small ribosomal subunit protein uS15 from Cupriavidus metallidurans (strain ATCC 43123 / DSM 2839 / NBRC 102507 / CH34) (Ralstonia metallidurans).